Here is a 366-residue protein sequence, read N- to C-terminus: Putative integrase/recombinase HI_1572 (366 aa).

The Core-binding (CB) domain occupies 54-133 (ITLDELIDKY…SLSALMAKTI (80 aa)). The Tyr recombinase domain occupies 168–331 (IFVSGYDVEH…DMAEGYKTKA (164 aa)). Active-site residues include Arg-201, Lys-226, and His-308. Tyr-318 acts as the O-(3'-phospho-DNA)-tyrosine intermediate in catalysis.

It belongs to the 'phage' integrase family.

The polypeptide is Putative integrase/recombinase HI_1572 (Haemophilus influenzae (strain ATCC 51907 / DSM 11121 / KW20 / Rd)).